The sequence spans 173 residues: Co-chaperone protein HscB homolog (173 aa).

The J domain maps to 5 to 77 (CHFAQFDLQP…PRRALYLLTL (73 aa)).

Belongs to the HscB family. Interacts with HscA and stimulates its ATPase activity.

Co-chaperone involved in the maturation of iron-sulfur cluster-containing proteins. Seems to help targeting proteins to be folded toward HscA. The protein is Co-chaperone protein HscB homolog of Pseudomonas aeruginosa (strain UCBPP-PA14).